Reading from the N-terminus, the 27-residue chain is WCKQSGEMCNVLDQNCCDGYCIVFVCT.

3 disulfide bridges follow: cysteine 2-cysteine 17, cysteine 9-cysteine 21, and cysteine 16-cysteine 26.

The protein belongs to the conotoxin O1 superfamily. As to expression, expressed by the venom duct.

Its subcellular location is the secreted. Its function is as follows. Delta-conotoxins bind to site 6 of voltage-gated sodium channels (Nav) and inhibit the inactivation process. Induces membrane depolarization and spontaneous repetitive firing of neurons. This Conus textile (Cloth-of-gold cone) protein is Delta-conotoxin TxVIB.